We begin with the raw amino-acid sequence, 495 residues long: Probable cytosol aminopeptidase (495 aa).

The Mn(2+) site is built by Lys266 and Asp271. Lys278 is an active-site residue. Mn(2+) is bound by residues Asp289, Asp348, and Glu350. Residue Arg352 is part of the active site.

It belongs to the peptidase M17 family. Mn(2+) serves as cofactor.

The protein localises to the cytoplasm. The enzyme catalyses Release of an N-terminal amino acid, Xaa-|-Yaa-, in which Xaa is preferably Leu, but may be other amino acids including Pro although not Arg or Lys, and Yaa may be Pro. Amino acid amides and methyl esters are also readily hydrolyzed, but rates on arylamides are exceedingly low.. The catalysed reaction is Release of an N-terminal amino acid, preferentially leucine, but not glutamic or aspartic acids.. Its function is as follows. Presumably involved in the processing and regular turnover of intracellular proteins. Catalyzes the removal of unsubstituted N-terminal amino acids from various peptides. In Pseudomonas aeruginosa (strain UCBPP-PA14), this protein is Probable cytosol aminopeptidase.